The chain runs to 81 residues: Styelin-D (81 aa).

Residues 1–22 (MQMKATILIVLVALFMIQQSEA) form the signal peptide. Tryptophan 24 carries the 6'-bromotryptophan modification. Arginine 26 is modified (3,4-dihydroxyarginine). 3 positions are modified to 4,5-dihydroxylysine: lysine 27, lysine 30, and lysine 34. 2 positions are modified to 3',4'-dihydroxyphenylalanine: tyrosine 36 and tyrosine 37. Lysine 38 carries the 4,5-dihydroxylysine modification. The residue at position 40 (lysine 40) is a 5-hydroxylysine. 3',4'-dihydroxyphenylalanine is present on residues tyrosine 41 and tyrosine 42. Position 44 is a 5-hydroxylysine (lysine 44). Leucine amide is present on leucine 54. Residues 56 to 81 (DMTDEEFQDFMKEVEQAREEELQSRQ) constitute a propeptide, removed in mature form.

In terms of processing, contains L-DOPA (3',4'-dihydroxyphenylalanine). As to expression, hemocytes and pharyngeal tissues.

Its subcellular location is the secreted. In terms of biological role, bactericidal against several Gram-positive and Gram-negative bacteria. Plays a significant role in the innate immune mechanisms of S.clava. This chain is Styelin-D, found in Styela clava (Sea squirt).